The following is a 719-amino-acid chain: Acyl-coenzyme A oxidase (719 aa).

The Microbody targeting signal signature appears at 716-719; that stretch reads APKI.

It belongs to the acyl-CoA oxidase family. The cofactor is FAD.

It localises to the peroxisome. The catalysed reaction is a 2,3-saturated acyl-CoA + O2 = a (2E)-enoyl-CoA + H2O2. It participates in lipid metabolism; peroxisomal fatty acid beta-oxidation. The protein is Acyl-coenzyme A oxidase (POX1) of Komagataella pastoris (Yeast).